A 292-amino-acid polypeptide reads, in one-letter code: Short chain dehydrogenase/reductase CPUR_05418 (292 aa).

Residues I44 and R156 each coordinate NADP(+). Residues S172 and Y186 each act as proton donor in the active site. 4 residues coordinate NADP(+): Y186, K190, I221, and T223. Catalysis depends on K190, which acts as the Lowers pKa of active site Tyr.

It belongs to the short-chain dehydrogenases/reductases (SDR) family.

Its pathway is secondary metabolite biosynthesis. Short chain dehydrogenase/reductase; part of the ergochrome gene cluster responsible for the typical purple-black color of the ergot sclerotia. The ergochrome gene cluster produces several ergot pigments including the yellow ergochrome secalonic acid and its derivatives, as well as the red anthraquinones endocrocin and clavorubin. The pathway begins with the synthesis of atrochrysone thioester by the polyketide synthase (PKS) CPUR_05437. The atrochrysone carboxyl ACP thioesterase CPUR_05436 then breaks the thioester bond and releases the atrochrysone carboxylic acid from CPUR_05437. The atrochrysone carboxylic acid is then converted to atrochrysone which is further transformed into emodin anthrone. The next step is performed by the anthrone oxygenase CPUR_05434 that catalyzes the oxidation of emodinanthrone to emodin. Emodin is further modified to yield monodictyphenone via several steps involving CPUR_05427, CPUR_05428, CPUR_05429 and CPUR_05430. The short chain dehydrogenase/reductase CPUR_05418 then catalyzes the C-5 ketoreduction to give the xanthone skeleton of the monomeric units. Ergochromes formation requires further dimerization steps of different xanthone units, probably catalyzed by the cytochrome P450 monooxygenase CPUR_05419. CPUR_05425, CPUR_05426 and CPUR_05431 are unique to Claviceps, thus it is likely that they are involved in further modification of xanthone units or in their dimerization. The yellow ergochromes and the red anthraquinone pigments endocrocin and clavorubin are products from the same PKS derived precursors and the latter are likely shunt products in the pathway of xanthone biosynthesis. It is proposed that atrochrysone carboxylic acid released from the PKS CPUR_05437 can also be converted to endocrocin anthrone which is further oxidized into endocrocin by CPUR_05435. Endocrocin could be then modified to clavorubin, possibly by CPUR_05423 and CPUR_05431. Clavorubin is the principal anthraquinone metabolite produced by the cluster with a much higher yield compared to endocrocin. The polypeptide is Short chain dehydrogenase/reductase CPUR_05418 (Claviceps purpurea (strain 20.1) (Ergot fungus)).